A 257-amino-acid polypeptide reads, in one-letter code: Zinc transporter ZupT (257 aa).

Transmembrane regions (helical) follow at residues Leu5–Gly25, Leu32–Met52, Gly61–Leu81, Ala109–Val129, Leu137–Ala157, Ile171–Ile191, Met195–Leu215, and Gly236–Ile256. 2 residues coordinate Fe(2+): Asn120 and Glu123. Glu123 and His148 together coordinate Zn(2+). Residues Asn149, Glu152, and Glu181 each coordinate Fe(2+). Zn(2+) is bound at residue Glu152.

This sequence belongs to the ZIP transporter (TC 2.A.5) family. ZupT subfamily.

Its subcellular location is the cell inner membrane. The enzyme catalyses Zn(2+)(in) = Zn(2+)(out). Its function is as follows. Mediates zinc uptake. May also transport other divalent cations. This chain is Zinc transporter ZupT, found in Shigella flexneri serotype 5b (strain 8401).